The following is a 592-amino-acid chain: Aspartate--tRNA(Asp/Asn) ligase (592 aa).

Glutamate 176 contacts L-aspartate. The tract at residues glutamine 200 to lysine 203 is aspartate. Arginine 222 is a binding site for L-aspartate. ATP is bound by residues arginine 222–glutamate 224 and glutamine 231. Residue histidine 450 participates in L-aspartate binding. ATP is bound at residue glutamate 484. L-aspartate is bound at residue arginine 491. An ATP-binding site is contributed by glycine 536–arginine 539.

The protein belongs to the class-II aminoacyl-tRNA synthetase family. Type 1 subfamily. In terms of assembly, homodimer.

Its subcellular location is the cytoplasm. It carries out the reaction tRNA(Asx) + L-aspartate + ATP = L-aspartyl-tRNA(Asx) + AMP + diphosphate. Functionally, aspartyl-tRNA synthetase with relaxed tRNA specificity since it is able to aspartylate not only its cognate tRNA(Asp) but also tRNA(Asn). Reaction proceeds in two steps: L-aspartate is first activated by ATP to form Asp-AMP and then transferred to the acceptor end of tRNA(Asp/Asn). The protein is Aspartate--tRNA(Asp/Asn) ligase of Anoxybacillus flavithermus (strain DSM 21510 / WK1).